Here is a 115-residue protein sequence, read N- to C-terminus: NADH-ubiquinone oxidoreductase chain 3 (115 aa).

The next 3 helical transmembrane spans lie at Phe3–Trp23, Phe55–Leu75, and Leu84–Tyr104.

This sequence belongs to the complex I subunit 3 family. As to quaternary structure, core subunit of respiratory chain NADH dehydrogenase (Complex I) which is composed of 45 different subunits. Interacts with TMEM186. Interacts with TMEM242.

The protein localises to the mitochondrion inner membrane. The catalysed reaction is a ubiquinone + NADH + 5 H(+)(in) = a ubiquinol + NAD(+) + 4 H(+)(out). Functionally, core subunit of the mitochondrial membrane respiratory chain NADH dehydrogenase (Complex I) which catalyzes electron transfer from NADH through the respiratory chain, using ubiquinone as an electron acceptor. Essential for the catalytic activity of complex I. This chain is NADH-ubiquinone oxidoreductase chain 3, found in Rhinolophus pumilus (Horseshoe bat).